Reading from the N-terminus, the 548-residue chain is BTB/POZ domain-containing protein At5g17580 (548 aa).

Positions 7 to 74 constitute a BTB domain; the sequence is SDLHINVKGV…CNGSEFKFTS (68 aa). Residues 180–442 enclose the NPH3 domain; sequence DWKSEDLITI…VNVLCVSQLQ (263 aa). Tyrosine 383 is subject to Phosphotyrosine. The stretch at 442-493 forms a coiled coil; that stretch reads QIRDTVAKEIKGMEEKVDEEEEEEIEVSSDEDEMEKMSNKLLGLEIENDECV.

The protein belongs to the NPH3 family.

It functions in the pathway protein modification; protein ubiquitination. May act as a substrate-specific adapter of an E3 ubiquitin-protein ligase complex (CUL3-RBX1-BTB) which mediates the ubiquitination and subsequent proteasomal degradation of target proteins. The protein is BTB/POZ domain-containing protein At5g17580 of Arabidopsis thaliana (Mouse-ear cress).